The chain runs to 141 residues: Small ribosomal subunit protein uS11 (141 aa).

Belongs to the universal ribosomal protein uS11 family. Part of the 30S ribosomal subunit.

Its function is as follows. Located on the platform of the 30S subunit. The polypeptide is Small ribosomal subunit protein uS11 (Pyrobaculum calidifontis (strain DSM 21063 / JCM 11548 / VA1)).